The following is a 70-amino-acid chain: Disintegrin triflavin (70 aa).

The region spanning 1 to 70 is the Disintegrin domain; it reads GEECDCGSPS…SADCPRWNGL (70 aa). 6 cysteine pairs are disulfide-bonded: Cys4–Cys19, Cys6–Cys14, Cys13–Cys36, Cys27–Cys33, Cys32–Cys57, and Cys45–Cys64. The short motif at 49 to 51 is the Cell attachment site element; sequence RGD.

Belongs to the venom metalloproteinase (M12B) family. P-II subfamily. P-IIa sub-subfamily. Monomer. In terms of tissue distribution, expressed by the venom gland.

It localises to the secreted. Inhibits fibrinogen interaction with platelets. Acts by binding to alpha-IIb/beta-3 (ITGA2B/ITGB3) on the platelet surface and inhibits aggregation induced by ADP, thrombin, platelet-activating factor and collagen. This chain is Disintegrin triflavin, found in Protobothrops flavoviridis (Habu).